The primary structure comprises 392 residues: Cell division protein DivIB (392 aa).

Positions 1 to 88 (MSEKDNNLTP…TQSSEAPIEN (88 aa)) are disordered. At 1–131 (MSEKDNNLTP…KGSAPLLKKM (131 aa)) the chain is on the cytoplasmic side. The span at 14–32 (KHLEYQKRKAEEAKKEKKA) shows a compositional bias: basic and acidic residues. Residues 58 to 76 (TRDEAESAELLEEGFETNN) are compositionally biased toward acidic residues. Residues 132 to 152 (WPALAVVVLVFVGSLYLISPL) form a helical membrane-spanning segment. Residues 153 to 224 (SKISTFSVSG…NRFEAIVKEH (72 aa)) enclose the POTRA domain. The Extracellular segment spans residues 153–392 (SKISTFSVSG…TAQSTTTSSN (240 aa)). The disordered stretch occupies residues 368 to 392 (ISAQNAKKTDASSENTAQSTTTSSN).

The protein belongs to the FtsQ/DivIB family. DivIB subfamily.

It localises to the cell membrane. Functionally, cell division protein that may be involved in stabilizing or promoting the assembly of the division complex. The polypeptide is Cell division protein DivIB (Lactococcus lactis subsp. lactis (strain KF147)).